We begin with the raw amino-acid sequence, 179 residues long: ATP synthase subunit delta, chloroplastic (179 aa).

This sequence belongs to the ATPase delta chain family. F-type ATPases have 2 components, F(1) - the catalytic core - and F(0) - the membrane proton channel. F(1) has five subunits: alpha(3), beta(3), gamma(1), delta(1), epsilon(1). CF(0) has four main subunits: a(1), b(1), b'(1) and c(10-14). The alpha and beta chains form an alternating ring which encloses part of the gamma chain. F(1) is attached to F(0) by a central stalk formed by the gamma and epsilon chains, while a peripheral stalk is formed by the delta, b and b' chains.

The protein resides in the plastid. It localises to the chloroplast thylakoid membrane. In terms of biological role, f(1)F(0) ATP synthase produces ATP from ADP in the presence of a proton or sodium gradient. F-type ATPases consist of two structural domains, F(1) containing the extramembraneous catalytic core and F(0) containing the membrane proton channel, linked together by a central stalk and a peripheral stalk. During catalysis, ATP synthesis in the catalytic domain of F(1) is coupled via a rotary mechanism of the central stalk subunits to proton translocation. Functionally, this protein is part of the stalk that links CF(0) to CF(1). It either transmits conformational changes from CF(0) to CF(1) or is implicated in proton conduction. In Ochrosphaera neapolitana, this protein is ATP synthase subunit delta, chloroplastic.